A 450-amino-acid polypeptide reads, in one-letter code: UDP-N-acetylmuramoylalanine--D-glutamate ligase (450 aa).

An ATP-binding site is contributed by 118 to 124; the sequence is GSNGKTT.

It belongs to the MurCDEF family.

Its subcellular location is the cytoplasm. The catalysed reaction is UDP-N-acetyl-alpha-D-muramoyl-L-alanine + D-glutamate + ATP = UDP-N-acetyl-alpha-D-muramoyl-L-alanyl-D-glutamate + ADP + phosphate + H(+). Its pathway is cell wall biogenesis; peptidoglycan biosynthesis. Cell wall formation. Catalyzes the addition of glutamate to the nucleotide precursor UDP-N-acetylmuramoyl-L-alanine (UMA). The polypeptide is UDP-N-acetylmuramoylalanine--D-glutamate ligase (Halalkalibacterium halodurans (strain ATCC BAA-125 / DSM 18197 / FERM 7344 / JCM 9153 / C-125) (Bacillus halodurans)).